The sequence spans 29 residues: Kalata-B11 (29 aa).

Residues 1–29 (GLPVCGETCFGGTCNTPGCSCTDPICTRD) constitute a cross-link (cyclopeptide (Gly-Asp)). Cystine bridges form between Cys-5-Cys-19, Cys-9-Cys-21, and Cys-14-Cys-26.

In terms of processing, this is a cyclic peptide.

In terms of biological role, probably participates in a plant defense mechanism. The sequence is that of Kalata-B11 from Oldenlandia affinis.